A 264-amino-acid polypeptide reads, in one-letter code: Acyl-[acyl-carrier-protein]--UDP-N-acetylglucosamine O-acyltransferase (264 aa).

Belongs to the transferase hexapeptide repeat family. LpxA subfamily. As to quaternary structure, homotrimer.

It localises to the cytoplasm. It carries out the reaction a (3R)-hydroxyacyl-[ACP] + UDP-N-acetyl-alpha-D-glucosamine = a UDP-3-O-[(3R)-3-hydroxyacyl]-N-acetyl-alpha-D-glucosamine + holo-[ACP]. It functions in the pathway glycolipid biosynthesis; lipid IV(A) biosynthesis; lipid IV(A) from (3R)-3-hydroxytetradecanoyl-[acyl-carrier-protein] and UDP-N-acetyl-alpha-D-glucosamine: step 1/6. Functionally, involved in the biosynthesis of lipid A, a phosphorylated glycolipid that anchors the lipopolysaccharide to the outer membrane of the cell. The sequence is that of Acyl-[acyl-carrier-protein]--UDP-N-acetylglucosamine O-acyltransferase from Leptothrix cholodnii (strain ATCC 51168 / LMG 8142 / SP-6) (Leptothrix discophora (strain SP-6)).